The following is a 333-amino-acid chain: Transcription initiation factor IIB (333 aa).

Residues 33 to 64 form a TFIIB-type zinc finger; that stretch reads EVYKCPICGNDKFVYNYERGEAVCIVCGAVVQ. Cys37, Cys40, Cys56, and Cys59 together coordinate Zn(2+). 2 repeat units span residues 149–232 and 243–324.

Belongs to the TFIIB family.

Its function is as follows. Stabilizes TBP binding to an archaeal box-A promoter. Also responsible for recruiting RNA polymerase II to the pre-initiation complex (DNA-TBP-TFIIB). This chain is Transcription initiation factor IIB, found in Pyrobaculum aerophilum (strain ATCC 51768 / DSM 7523 / JCM 9630 / CIP 104966 / NBRC 100827 / IM2).